The chain runs to 124 residues: Seripauperin-17 (124 aa).

The N-terminal stretch at 1 to 20 (MVKLTSIAAGVAAIAAGVAA) is a signal peptide.

This sequence belongs to the SRP1/TIP1 family. Seripauperin subfamily.

This chain is Seripauperin-17 (PAU17), found in Saccharomyces cerevisiae (strain ATCC 204508 / S288c) (Baker's yeast).